Reading from the N-terminus, the 209-residue chain is Outer-membrane lipoprotein carrier protein (209 aa).

The first 24 residues, 1 to 24, serve as a signal peptide directing secretion; it reads MTRYVISRLSAIALLALAPALALA.

It belongs to the LolA family. Monomer.

It localises to the periplasm. Participates in the translocation of lipoproteins from the inner membrane to the outer membrane. Only forms a complex with a lipoprotein if the residue after the N-terminal Cys is not an aspartate (The Asp acts as a targeting signal to indicate that the lipoprotein should stay in the inner membrane). This Bordetella avium (strain 197N) protein is Outer-membrane lipoprotein carrier protein.